Here is a 462-residue protein sequence, read N- to C-terminus: N-myc proto-oncogene protein (462 aa).

Residues 19–47 (LEFDSLQPCFYPDEDDFYFGGPDSTPPGE) are interaction with AURKA. An interaction with AURKA and FBXW7 region spans residues 61–90 (LSPSRAFPEHSPEPSNWATEMLLPEADLWG). Positions 76-85 (NWATEMLLPE) match the 9aaTAD motif. Disordered regions lie at residues 133 to 177 (EKLQ…ATLP), 232 to 290 (AAPA…SNNK), and 332 to 390 (APSP…LERQ). Residues 138–174 (GHGPPGASSSCPAPGVGASSSGGRALGGSASAGRTGA) are compositionally biased toward low complexity. Over residues 257 to 276 (TLSDSDDEDDEEEDEEEEID) the composition is skewed to acidic residues. A phosphoserine; by CK2 mark is found at serine 259 and serine 261. Residues 379 to 431 (ERRRNHNILERQRRNDLRSSFLTLRDHVPELVKNEKAAKVVILKKATEYVHAL) enclose the bHLH domain. Residues 431 to 452 (LQANEHQLLLEKEKLQARQQQL) are leucine-zipper.

In terms of assembly, efficient DNA binding requires dimerization with another bHLH protein. Binds DNA as a heterodimer with MAX. Interacts with KDM5A, KDM5B and HUWE1. Interacts with MYCNOS. Interacts with AURKA; interaction is phospho-independent and triggers AURKA activation; AURKA competes with FBXW7 for binding to unphosphorylated MYCN but not for binding to unphosphorylated MYCN. Interacts with FBXW7; FBXW7 competes with AURKA for binding to unphosphorylated MYCN but not for binding to phosphorylated MYCN. Phosphorylated by GSK3-beta which may promote its degradation. Phosphorylated by AURKA.

It is found in the nucleus. Functionally, positively regulates the transcription of MYCNOS in neuroblastoma cells. In Rattus norvegicus (Rat), this protein is N-myc proto-oncogene protein (Mycn).